A 269-amino-acid polypeptide reads, in one-letter code: Transmembrane protein 41B (269 aa).

The next 6 membrane-spanning stretches (helical) occupy residues 30 to 50 (TSLL…FLVY), 87 to 107 (FYVQ…TFAI), 125 to 147 (LALF…LSYL), 175 to 195 (LINY…FINI), 203 to 223 (PLKV…FVAI), and 240 to 260 (SWNS…PALF). Residues 118-229 (GFLYPFPLAL…FVAIKAGTTL (112 aa)) form a VTT domain; required for its function in autophagy region.

This sequence belongs to the TMEM41 family.

The protein localises to the endoplasmic reticulum membrane. Its subcellular location is the endomembrane system. It catalyses the reaction a 1,2-diacyl-sn-glycero-3-phospho-L-serine(in) = a 1,2-diacyl-sn-glycero-3-phospho-L-serine(out). The enzyme catalyses cholesterol(in) = cholesterol(out). The catalysed reaction is a 1,2-diacyl-sn-glycero-3-phosphocholine(in) = a 1,2-diacyl-sn-glycero-3-phosphocholine(out). It carries out the reaction a 1,2-diacyl-sn-glycero-3-phosphoethanolamine(in) = a 1,2-diacyl-sn-glycero-3-phosphoethanolamine(out). Functionally, phospholipid scramblase involved in lipid homeostasis and membrane dynamics processes. Has phospholipid scramblase activity toward cholesterol and phosphatidylserine, as well as phosphatidylethanolamine and phosphatidylcholine. Required for autophagosome formation: participates in early stages of autophagosome biogenesis at the endoplasmic reticulum (ER) membrane by reequilibrating the leaflets of the ER as lipids are extracted by ATG2 (ATG2A or ATG2B) to mediate autophagosome assembly. In addition to autophagy, involved in other processes in which phospholipid scramblase activity is required. Required for normal motor neuron development. This chain is Transmembrane protein 41B, found in Gallus gallus (Chicken).